A 608-amino-acid polypeptide reads, in one-letter code: ATP-binding protein Uup (608 aa).

ABC transporter domains lie at 7-217 (APVL…AADA) and 285-512 (VEAK…FAPV). Residues 42–49 (GRNGAGKS) and 317–324 (GPNGAGKT) contribute to the ATP site. The C-terminal domain (CTD), binds DNA stretch occupies residues 522-608 (AAPAAPKKSA…LEEKKENLAG (87 aa)).

Belongs to the ABC transporter superfamily. ABCF family. Uup subfamily.

The protein localises to the cytoplasm. It catalyses the reaction ATP + H2O = ADP + phosphate + H(+). In terms of biological role, probably plays a role in ribosome assembly or function. May be involved in resolution of branched DNA intermediates that result from template switching in postreplication gaps. Binds DNA and has ATPase activity. Its function is as follows. One of a cluster of genes involved in attachment of the holdfast to the cell. The holdfast is a structure that allows the bacteria to firmly adhere to surfaces. The protein is ATP-binding protein Uup of Caulobacter vibrioides (strain ATCC 19089 / CIP 103742 / CB 15) (Caulobacter crescentus).